The sequence spans 376 residues: Multicilin (376 aa).

Residues 165 to 213 (EQYWRDVADHNQKALGDALVENNQLQVSLTEKQEEIASLKEKNIQLNEL) are a coiled coil. Residues 230–261 (ERPKHSSGATQGRLPVKRSLEDFYPQSNEPDS) are disordered. Residues 331-376 (TELEEDVSFRTSIKEHSTIRTLAFPQGNAFTIRTAAGGYKFRWVPN) form a TIRT domain region.

It belongs to the geminin family. As to quaternary structure, component of the EDM complex, at least composed of e2f4, e2f5, mcidas and tfdp1.

The protein resides in the nucleus. Transcription regulator specifically required for multiciliate cell differentiation. Acts in a multiprotein complex containing e2f4 and e2f5 that binds and activate genes required for centriole biogenesis. Activates genes required for centriole assembly (plk4, cep152) and genes specifically required for motile cilia formation (foxj1). Also promotes the deuterosome pathway of centriole biogenesis by activating expression of deup1, but not its paralog cep63. The polypeptide is Multicilin (mcidas) (Xenopus tropicalis (Western clawed frog)).